Consider the following 408-residue polypeptide: Myb/SANT-like DNA-binding domain-containing protein 4 (408 aa).

The 74-residue stretch at 4-77 (LKRKRKSNFS…EVKRRYLDWR (74 aa)) folds into the Myb-like domain. The stretch at 236–367 (HLLVTLEKQK…IEKERLQDAL (132 aa)) forms a coiled coil.

The chain is Myb/SANT-like DNA-binding domain-containing protein 4 (msantd4) from Xenopus tropicalis (Western clawed frog).